Reading from the N-terminus, the 750-residue chain is E3 ubiquitin-protein ligase rfwd3.S (750 aa).

The disordered stretch occupies residues R92–P206. Basic residues predominate over residues R105–R116. Residues T122 to A144 are compositionally biased toward polar residues. Residues S168–G181 are compositionally biased toward acidic residues. The RING-type; degenerate zinc finger occupies C263–N307. The segment covering T387–S405 has biased composition (low complexity). The segment at T387–Q406 is disordered. WD repeat units follow at residues I470–T510, N512–Q552, and G558–H603.

Requires [4Fe-4S] cluster as cofactor.

Its subcellular location is the nucleus. It localises to the PML body. It is found in the cytoplasm. It carries out the reaction S-ubiquitinyl-[E2 ubiquitin-conjugating enzyme]-L-cysteine + [acceptor protein]-L-lysine = [E2 ubiquitin-conjugating enzyme]-L-cysteine + N(6)-ubiquitinyl-[acceptor protein]-L-lysine.. It functions in the pathway protein modification; protein ubiquitination. In terms of biological role, E3 ubiquitin-protein ligase required for the repair of DNA interstrand cross-links (ICL) in response to DNA damage. Plays a key role in RPA-mediated DNA damage signaling and repair. Required to translesion DNA synthesis across DNA-protein cross-link adducts by catalyzing ubiquitination of proteins on single-stranded DNA (ssDNA). Mediates ubiquitination of the hmces DNA-protein cross-link, possibly promoting its degradation. In Xenopus laevis (African clawed frog), this protein is E3 ubiquitin-protein ligase rfwd3.S (rfwd3.S).